The following is a 460-amino-acid chain: Argininosuccinate lyase (460 aa).

It belongs to the lyase 1 family. Argininosuccinate lyase subfamily.

The protein localises to the cytoplasm. It carries out the reaction 2-(N(omega)-L-arginino)succinate = fumarate + L-arginine. Its pathway is amino-acid biosynthesis; L-arginine biosynthesis; L-arginine from L-ornithine and carbamoyl phosphate: step 3/3. In Campylobacter jejuni (strain RM1221), this protein is Argininosuccinate lyase.